The primary structure comprises 407 residues: Zinc finger protein 260 (407 aa).

The tract at residues 1 to 21 (MLESLQPESELLHDEPDPGEK) is disordered. The segment covering 10–21 (ELLHDEPDPGEK) has biased composition (basic and acidic residues). The C2H2-type 1 zinc-finger motif lies at 23 to 45 (YECDECRKTFSLEQHFVEHKKTH). The C2H2-type 2; degenerate zinc finger occupies 51 to 73 (PECTGCGEEFSKASSLTRHLRSR). 11 C2H2-type zinc fingers span residues 79–101 (YKCG…QKQH), 131–153 (YACK…EKIH), 159–181 (FECN…QNVH), 187–209 (FKCN…QRIH), 215–237 (YECK…QRSH), 243–265 (YTCK…EKIH), 271–293 (YKCN…HNIH), 299–321 (YECN…VRIH), 327–349 (YECK…MRSH), 355–377 (YGCN…MRIH), and 383–405 (YQCS…QRIH).

Belongs to the krueppel C2H2-type zinc-finger protein family. Binds DNA. Interacts with GATA4. As to expression, expressed in both embryonic, fetal and adult heart. Also expressed in lung, skeletal muscle and adrenal glands.

It localises to the nucleus. Transcription factor that acts as a cardiac regulator and an effector of alpha1-adrenergic signaling. Binds to PE response elements (PERE) present in the promoter of genes such as ANF/NPPA and acts as a direct transcriptional activator of NPPA. Also acts as a cofactor with GATA4, a key cardiac regulator. This Rattus norvegicus (Rat) protein is Zinc finger protein 260 (Znf260).